Reading from the N-terminus, the 109-residue chain is Class I hydrophobin dewE (109 aa).

A signal peptide spans 1 to 20 (MKVATALSVLAVAGSALASA). Disulfide bonds link C34–C87, C40–C81, C41–C74, and C88–C102.

This sequence belongs to the fungal hydrophobin family. Self-assembles to form functional amyloid fibrils called rodlets. Self-assembly into fibrillar rodlets occurs spontaneously at hydrophobic:hydrophilic interfaces and the rodlets further associate laterally to form amphipathic monolayers.

It localises to the secreted. Its subcellular location is the spore wall. Its function is as follows. Aerial growth, conidiation, and dispersal of filamentous fungi in the environment rely upon a capability of their secreting small amphipathic proteins called hydrophobins (HPBs) with low sequence identity. Class I can self-assemble into an outermost layer of rodlet bundles on aerial cell surfaces, conferring cellular hydrophobicity that supports fungal growth, development and dispersal; whereas Class II form highly ordered films at water-air interfaces through intermolecular interactions but contribute nothing to the rodlet structure. DewE is a class I hydrophobin that contributes to the hydrophobicity of the spore surface. The polypeptide is Class I hydrophobin dewE (Emericella nidulans (strain FGSC A4 / ATCC 38163 / CBS 112.46 / NRRL 194 / M139) (Aspergillus nidulans)).